Reading from the N-terminus, the 773-residue chain is MMNDSFCRIIAGEIQARPEQVDAAVRLLDEGNTVPFIARYRKEITGGLDDTQLRNLETRLSYLRELEERRQAILKSISEQGKLTDDLAKAINATLSKTELEDLYLPYKPKRRTRGQIAIEAGLEPLADLLWSDPSHTPEVAAAQYVYADKGVADTKAALDGARYILMERFAEDAALLAKVRDYLWKNAHLVSTVVSGKEEEGAKFRDYFDHHEPLSTVPSHRALAMFRGRNEGVLQLSLNADPQFDEPPKESYCEQIIMDHLGLRLNNAPADSWRKGVVSWTWRIKVLMHLETELMGTVRERAEDEAINVFARNLHDLLMAAPAGLRATMGLDPGLRTGVKVAVVDATGKLVATDTIYPHTGQAAKAAMTVAALCEKHNVELVAIGNGTASRETERFYLDVQKQFPKVTAQKVIVSEAGASVYSASELAAQEFPDLDVSLRGAVSIARRLQDPLAELVKIDPKSIGVGQYQHDVSQTQLARKLDAVVEDCVNAVGVDLNTASVPLLTRVAGLTRMMAQNIVAWRDENGQFQNRQQLLKVSRLGPKAFEQCAGFLRINHGDNPLDASTVHPEAYPVVERILAATQQALKDLMGNSSELRNLKASDFTDEKFGVPTVTDIIKELEKPGRDPRPEFKTAQFADGVETMNDLQPGMILEGAVTNVTNFGAFVDIGVHQDGLVHISSLSNKFVEDPHTVVKAGDIVKVKVLEVDLQRKRIALTMRLDEQPGETNARRGGGNERPQNNRPAAKPRGREAQPAGNSAMMDALAAAMGKKR.

An S1 motif domain is found at glycine 651–arginine 720. The tract at residues leucine 721–arginine 773 is disordered.

This Escherichia coli (strain K12) protein is Protein YhgF (yhgF).